Consider the following 161-residue polypeptide: 2-C-methyl-D-erythritol 2,4-cyclodiphosphate synthase (161 aa).

Residues Asp-10 and His-12 each coordinate a divalent metal cation. 4-CDP-2-C-methyl-D-erythritol 2-phosphate-binding positions include 10–12 (DVH) and 36–37 (HS). His-44 is an a divalent metal cation binding site. 4-CDP-2-C-methyl-D-erythritol 2-phosphate is bound by residues 58-60 (DIG), 63-67 (FPDTD), 102-108 (AQAPKML), 134-137 (TTTE), Phe-141, and Arg-144.

Belongs to the IspF family. Homotrimer. It depends on a divalent metal cation as a cofactor.

The enzyme catalyses 4-CDP-2-C-methyl-D-erythritol 2-phosphate = 2-C-methyl-D-erythritol 2,4-cyclic diphosphate + CMP. The protein operates within isoprenoid biosynthesis; isopentenyl diphosphate biosynthesis via DXP pathway; isopentenyl diphosphate from 1-deoxy-D-xylulose 5-phosphate: step 4/6. Functionally, involved in the biosynthesis of isopentenyl diphosphate (IPP) and dimethylallyl diphosphate (DMAPP), two major building blocks of isoprenoid compounds. Catalyzes the conversion of 4-diphosphocytidyl-2-C-methyl-D-erythritol 2-phosphate (CDP-ME2P) to 2-C-methyl-D-erythritol 2,4-cyclodiphosphate (ME-CPP) with a corresponding release of cytidine 5-monophosphate (CMP). In Shewanella loihica (strain ATCC BAA-1088 / PV-4), this protein is 2-C-methyl-D-erythritol 2,4-cyclodiphosphate synthase.